The primary structure comprises 94 residues: Large ribosomal subunit protein bL27 (94 aa).

A propeptide spanning residues 1 to 9 (MLRLDLQFF) is cleaved from the precursor.

It belongs to the bacterial ribosomal protein bL27 family. Post-translationally, the N-terminus is cleaved by ribosomal processing cysteine protease Prp.

The polypeptide is Large ribosomal subunit protein bL27 (Bacillus velezensis (strain DSM 23117 / BGSC 10A6 / LMG 26770 / FZB42) (Bacillus amyloliquefaciens subsp. plantarum)).